Consider the following 45-residue polypeptide: Large ribosomal subunit protein bL34 (45 aa).

Belongs to the bacterial ribosomal protein bL34 family.

The protein is Large ribosomal subunit protein bL34 of Paenarthrobacter aurescens (strain TC1).